The following is a 129-amino-acid chain: Virion-associated protein (129 aa).

Coiled coils occupy residues 1–31 (MANL…ILEL) and 38–59 (IKES…LIND). Residues 122–129 (PAGWPNQY) are capsid binding.

The protein belongs to the caulimovirus ORF III family. In terms of assembly, homotetramer, through coiled-coil domain. Homotrimer when interacts with icosehadral capsid. Interacts with capsid protein, and with Movement protein.

Its subcellular location is the virion. It is found in the host cell junction. The protein localises to the host plasmodesma. Functionally, plays a role in virus cell-to-cell and plant-to-plant transmission. Interacts with virion icosahedral capsid and movement protein, thereby facilitating virion cell-to-cell transmission through plasmodesmata opened by viral movement protein. Also interacts with aphid transmission factor, attaching the virion to aphid stylet when the animal feeds on an virus infected plant. Aphid saliva may later detach the virion, inducing release of infectious particles when the animal feeds on a new plant. This is Virion-associated protein from Cauliflower mosaic virus (strain D/H) (CaMV).